A 253-amino-acid polypeptide reads, in one-letter code: Chloride intracellular channel protein 4 (253 aa).

N-acetylalanine is present on alanine 2. Residues 2 to 101 (ALSMPLNGLK…EEFLEEVLCP (100 aa)) form a required for insertion into the membrane region. A Phosphoserine modification is found at serine 4. Lysine 24 carries the post-translational modification N6-acetyllysine. Residues 37–57 (FSQRLFMILWLKGVVFSVSTV) form a helical membrane-spanning segment. The 164-residue stretch at 81 to 244 (NSEVKTDVNK…PSDKEVEIAY (164 aa)) folds into the GST C-terminal domain. Lysine 130 carries the post-translational modification N6-acetyllysine. Phosphoserine occurs at positions 132, 167, and 236. Tyrosine 244 carries the post-translational modification Phosphotyrosine.

It belongs to the chloride channel CLIC family. In terms of assembly, monomer. Interacts with HRH3.

It is found in the cytoplasm. Its subcellular location is the cytoskeleton. The protein localises to the microtubule organizing center. It localises to the centrosome. The protein resides in the cytoplasmic vesicle membrane. It is found in the nucleus. Its subcellular location is the cell membrane. The protein localises to the mitochondrion. It localises to the cell junction. It catalyses the reaction chloride(in) = chloride(out). The catalysed reaction is thiocyanate(in) = thiocyanate(out). The enzyme catalyses nitrate(in) = nitrate(out). It carries out the reaction iodide(out) = iodide(in). It catalyses the reaction bromide(in) = bromide(out). The catalysed reaction is fluoride(in) = fluoride(out). The enzyme catalyses choline(out) = choline(in). Functionally, in the soluble state, catalyzes glutaredoxin-like thiol disulfide exchange reactions with reduced glutathione as electron donor. Can insert into membranes and form voltage-dependent multi-ion conductive channels. Membrane insertion seems to be redox-regulated and may occur only under oxidizing conditions. Has alternate cellular functions like a potential role in angiogenesis or in maintaining apical-basolateral membrane polarity during mitosis and cytokinesis. Could also promote endothelial cell proliferation and regulate endothelial morphogenesis (tubulogenesis). Promotes cell-surface expression of HRH3. In Pongo abelii (Sumatran orangutan), this protein is Chloride intracellular channel protein 4 (CLIC4).